The following is a 186-amino-acid chain: Potassium-transporting ATPase KdpC subunit (186 aa).

A helical transmembrane segment spans residues 10–30 (LTIITMVLCGFLFPLAITLIG).

Belongs to the KdpC family. In terms of assembly, the system is composed of three essential subunits: KdpA, KdpB and KdpC.

It is found in the cell membrane. In terms of biological role, part of the high-affinity ATP-driven potassium transport (or Kdp) system, which catalyzes the hydrolysis of ATP coupled with the electrogenic transport of potassium into the cytoplasm. This subunit acts as a catalytic chaperone that increases the ATP-binding affinity of the ATP-hydrolyzing subunit KdpB by the formation of a transient KdpB/KdpC/ATP ternary complex. This is Potassium-transporting ATPase KdpC subunit from Staphylococcus aureus (strain MSSA476).